Here is a 318-residue protein sequence, read N- to C-terminus: tRNA-cytidine(32) 2-sulfurtransferase (318 aa).

Positions 52–57 (SGGKDS) match the PP-loop motif motif. [4Fe-4S] cluster is bound by residues C127, C130, and C218.

Belongs to the TtcA family. In terms of assembly, homodimer. The cofactor is Mg(2+). Requires [4Fe-4S] cluster as cofactor.

The protein localises to the cytoplasm. The catalysed reaction is cytidine(32) in tRNA + S-sulfanyl-L-cysteinyl-[cysteine desulfurase] + AH2 + ATP = 2-thiocytidine(32) in tRNA + L-cysteinyl-[cysteine desulfurase] + A + AMP + diphosphate + H(+). Its pathway is tRNA modification. Its function is as follows. Catalyzes the ATP-dependent 2-thiolation of cytidine in position 32 of tRNA, to form 2-thiocytidine (s(2)C32). The sulfur atoms are provided by the cysteine/cysteine desulfurase (IscS) system. The sequence is that of tRNA-cytidine(32) 2-sulfurtransferase from Actinobacillus pleuropneumoniae serotype 3 (strain JL03).